Here is a 336-residue protein sequence, read N- to C-terminus: Dihydroorotate dehydrogenase (quinone) (336 aa).

FMN-binding positions include 62–66 (AGLDK) and threonine 86. Lysine 66 lines the substrate pocket. A substrate-binding site is contributed by 111–115 (NRMGF). 2 residues coordinate FMN: asparagine 139 and asparagine 172. Asparagine 172 provides a ligand contact to substrate. Serine 175 functions as the Nucleophile in the catalytic mechanism. Asparagine 177 serves as a coordination point for substrate. FMN contacts are provided by lysine 217 and threonine 245. Residue 246-247 (NT) coordinates substrate. FMN is bound by residues glycine 268, glycine 297, and 318–319 (YS).

This sequence belongs to the dihydroorotate dehydrogenase family. Type 2 subfamily. As to quaternary structure, monomer. The cofactor is FMN.

The protein localises to the cell membrane. The enzyme catalyses (S)-dihydroorotate + a quinone = orotate + a quinol. It functions in the pathway pyrimidine metabolism; UMP biosynthesis via de novo pathway; orotate from (S)-dihydroorotate (quinone route): step 1/1. In terms of biological role, catalyzes the conversion of dihydroorotate to orotate with quinone as electron acceptor. This chain is Dihydroorotate dehydrogenase (quinone), found in Salmonella typhi.